We begin with the raw amino-acid sequence, 152 residues long: ESAT-6 secretion machinery protein EssA (152 aa).

The Cytoplasmic portion of the chain corresponds to 1 to 114 (MLMNSVIALT…PYIQNKQEKK (114 aa)). Residues 62–83 (ERQQQIKNDMFQNQASHSTRLN) are disordered. Residues 66–80 (QIKNDMFQNQASHST) are compositionally biased toward polar residues. Residues 115–135 (IFPYILMSVGAFLTLGFVIFS) form a helical membrane-spanning segment. Residues 136–152 (IHKGRRTKNESARKSNI) are Extracellular-facing.

The protein belongs to the EssA family.

Its subcellular location is the cell membrane. In terms of biological role, component of the ESAT-6 secretion system (Ess). Required for the secretion of EsxA and EsxB. This chain is ESAT-6 secretion machinery protein EssA, found in Staphylococcus aureus (strain COL).